The primary structure comprises 223 residues: Uracil-DNA glycosylase (223 aa).

Residue Asp-67 is the Proton acceptor of the active site.

The protein belongs to the uracil-DNA glycosylase (UDG) superfamily. UNG family.

Its subcellular location is the cytoplasm. The enzyme catalyses Hydrolyzes single-stranded DNA or mismatched double-stranded DNA and polynucleotides, releasing free uracil.. Functionally, excises uracil residues from the DNA which can arise as a result of misincorporation of dUMP residues by DNA polymerase or due to deamination of cytosine. The polypeptide is Uracil-DNA glycosylase (Borrelia duttonii (strain Ly)).